The primary structure comprises 300 residues: NAD kinase (300 aa).

Aspartate 75 serves as the catalytic Proton acceptor. NAD(+) is bound by residues 75–76 (DG), 149–150 (ND), arginine 177, aspartate 179, 190–195 (TAYALS), alanine 214, and glutamine 248.

Belongs to the NAD kinase family. Requires a divalent metal cation as cofactor.

It localises to the cytoplasm. The enzyme catalyses NAD(+) + ATP = ADP + NADP(+) + H(+). Its function is as follows. Involved in the regulation of the intracellular balance of NAD and NADP, and is a key enzyme in the biosynthesis of NADP. Catalyzes specifically the phosphorylation on 2'-hydroxyl of the adenosine moiety of NAD to yield NADP. This is NAD kinase from Burkholderia cenocepacia (strain ATCC BAA-245 / DSM 16553 / LMG 16656 / NCTC 13227 / J2315 / CF5610) (Burkholderia cepacia (strain J2315)).